Reading from the N-terminus, the 101-residue chain is NADH-quinone oxidoreductase subunit K (101 aa).

Transmembrane regions (helical) follow at residues 4-24, 30-50, and 61-81; these read LSHY…GIFL, IVLL…FIAF, and VFVF…LAIL.

This sequence belongs to the complex I subunit 4L family. NDH-1 is composed of 14 different subunits. Subunits NuoA, H, J, K, L, M, N constitute the membrane sector of the complex.

It localises to the cell inner membrane. The catalysed reaction is a quinone + NADH + 5 H(+)(in) = a quinol + NAD(+) + 4 H(+)(out). NDH-1 shuttles electrons from NADH, via FMN and iron-sulfur (Fe-S) centers, to quinones in the respiratory chain. The immediate electron acceptor for the enzyme in this species is believed to be ubiquinone. Couples the redox reaction to proton translocation (for every two electrons transferred, four hydrogen ions are translocated across the cytoplasmic membrane), and thus conserves the redox energy in a proton gradient. This is NADH-quinone oxidoreductase subunit K from Methylovorus glucosotrophus (strain SIP3-4).